Reading from the N-terminus, the 281-residue chain is Cytochrome bc1 complex cytochrome c subunit (281 aa).

Residues 17–37 (AAGAMALAVGLTGAGILVNAV) form a helical membrane-spanning segment. Cytochrome c domains follow at residues 52 to 132 (ALIQ…EANG) and 162 to 240 (ADVA…KSAK). Heme c contacts are provided by C65, C68, H69, C175, C178, and H179. A helical membrane pass occupies residues 259–279 (GMMMWLVGIVVLVAAAMWIGS).

The cytochrome bc1 complex is composed of a cytochrome b (QcrB), the Rieske iron-sulfur protein (QcrA) and a diheme cytochrome c (QcrC) subunit. The bc1 complex forms a supercomplex with cytochrome c oxidase (cytochrome aa3). Binds 2 heme c groups covalently per subunit.

It is found in the cell membrane. The enzyme catalyses a quinol + 2 Fe(III)-[cytochrome c](out) = a quinone + 2 Fe(II)-[cytochrome c](out) + 2 H(+)(out). Cytochrome c1 subunit of the cytochrome bc1 complex, an essential component of the respiratory electron transport chain required for ATP synthesis. The bc1 complex catalyzes the oxidation of menaquinol and the reduction of cytochrome c in the respiratory chain. The bc1 complex operates through a Q-cycle mechanism that couples electron transfer to generation of the proton gradient that drives ATP synthesis. The sequence is that of Cytochrome bc1 complex cytochrome c subunit (qcrC) from Corynebacterium diphtheriae (strain ATCC 700971 / NCTC 13129 / Biotype gravis).